The sequence spans 146 residues: Neutral phospholipase A2 B (146 aa).

The first 21 residues, 1 to 21, serve as a signal peptide directing secretion; the sequence is MNPAHLLILAAVCVSPLGASS. Residues 22–27 constitute a propeptide that is removed on maturation; it reads NRPMPL. 7 disulfides stabilise this stretch: Cys38/Cys98, Cys53/Cys145, Cys55/Cys71, Cys70/Cys126, Cys77/Cys119, Cys87/Cys112, and Cys105/Cys117. The Ca(2+) site is built by Tyr54, Gly56, and Gly58. The active site involves His74. Asp75 lines the Ca(2+) pocket. The active site involves Asp120.

This sequence belongs to the phospholipase A2 family. Group I subfamily. D49 sub-subfamily. Ca(2+) serves as cofactor. Expressed by the venom gland.

The protein resides in the secreted. The catalysed reaction is a 1,2-diacyl-sn-glycero-3-phosphocholine + H2O = a 1-acyl-sn-glycero-3-phosphocholine + a fatty acid + H(+). Its function is as follows. PLA2 catalyzes the calcium-dependent hydrolysis of the 2-acyl groups in 3-sn-phosphoglycerides. The sequence is that of Neutral phospholipase A2 B from Naja sputatrix (Malayan spitting cobra).